Reading from the N-terminus, the 362-residue chain is Probable dual-specificity RNA methyltransferase RlmN (362 aa).

Glu-91 acts as the Proton acceptor in catalysis. A Radical SAM core domain is found at 97–329 (QHYGLSVCVT…KKNGVNCVVR (233 aa)). A disulfide bond links Cys-104 and Cys-340. Cys-111, Cys-115, and Cys-118 together coordinate [4Fe-4S] cluster. Residues 163-164 (GE), Ser-195, 218-220 (SLH), and Asn-296 each bind S-adenosyl-L-methionine. Catalysis depends on Cys-340, which acts as the S-methylcysteine intermediate.

This sequence belongs to the radical SAM superfamily. RlmN family. The cofactor is [4Fe-4S] cluster.

The protein localises to the cytoplasm. It catalyses the reaction adenosine(2503) in 23S rRNA + 2 reduced [2Fe-2S]-[ferredoxin] + 2 S-adenosyl-L-methionine = 2-methyladenosine(2503) in 23S rRNA + 5'-deoxyadenosine + L-methionine + 2 oxidized [2Fe-2S]-[ferredoxin] + S-adenosyl-L-homocysteine. The catalysed reaction is adenosine(37) in tRNA + 2 reduced [2Fe-2S]-[ferredoxin] + 2 S-adenosyl-L-methionine = 2-methyladenosine(37) in tRNA + 5'-deoxyadenosine + L-methionine + 2 oxidized [2Fe-2S]-[ferredoxin] + S-adenosyl-L-homocysteine. Its function is as follows. Specifically methylates position 2 of adenine 2503 in 23S rRNA and position 2 of adenine 37 in tRNAs. The chain is Probable dual-specificity RNA methyltransferase RlmN from Streptococcus sanguinis (strain SK36).